Consider the following 228-residue polypeptide: Serum amyloid P-component (228 aa).

The signal sequence occupies residues 1-20; it reads MDKLLLWMSVFTSLLSEAFA. The Pentraxin (PTX) domain occupies 25–224; sequence NQKVFVFPRE…YVVIKPRMWD (200 aa). An N-linked (GlcNAc...) asparagine glycan is attached at asparagine 52. Cysteine 56 and cysteine 115 are oxidised to a cystine. Ca(2+) contacts are provided by aspartate 78, asparagine 79, glutamate 156, glutamine 157, aspartate 158, and glutamine 168.

The protein belongs to the pentraxin family. As to quaternary structure, homopentamer. Pentraxin (or pentaxin) have a discoid arrangement of 5 non-covalently bound subunits. Ca(2+) is required as a cofactor.

It is found in the secreted. This chain is Serum amyloid P-component (Apcs), found in Rattus norvegicus (Rat).